A 617-amino-acid chain; its full sequence is Phenylalanine--tRNA ligase beta subunit (617 aa).

The 78-residue stretch at 306–383 (IQEKQINAQV…IGYGYDNLKK (78 aa)) folds into the B5 domain. Residues Asp-361, Asp-367, Glu-370, and Asp-371 each coordinate Mg(2+).

This sequence belongs to the phenylalanyl-tRNA synthetase beta subunit family. Type 2 subfamily. Tetramer of two alpha and two beta subunits. Requires Mg(2+) as cofactor.

The protein resides in the cytoplasm. It carries out the reaction tRNA(Phe) + L-phenylalanine + ATP = L-phenylalanyl-tRNA(Phe) + AMP + diphosphate + H(+). In Dictyostelium discoideum (Social amoeba), this protein is Phenylalanine--tRNA ligase beta subunit (phesB).